The following is a 133-amino-acid chain: Acyl-CoA thioester hydrolase YciA (133 aa).

The HotDog ACOT-type domain occupies 8-123; the sequence is PQGELVLRTL…LFIYVAVDPD (116 aa).

The protein belongs to the acyl coenzyme A hydrolase family.

Catalyzes the hydrolysis of the thioester bond in palmitoyl-CoA and malonyl-CoA. The polypeptide is Acyl-CoA thioester hydrolase YciA (yciA) (Salmonella typhi).